The primary structure comprises 161 residues: UPF0262 protein Rru_A2770 (161 aa).

The protein belongs to the UPF0262 family.

The chain is UPF0262 protein Rru_A2770 from Rhodospirillum rubrum (strain ATCC 11170 / ATH 1.1.1 / DSM 467 / LMG 4362 / NCIMB 8255 / S1).